We begin with the raw amino-acid sequence, 705 residues long: Glycine--tRNA ligase beta subunit (705 aa).

The protein belongs to the class-II aminoacyl-tRNA synthetase family. In terms of assembly, tetramer of two alpha and two beta subunits.

It is found in the cytoplasm. The catalysed reaction is tRNA(Gly) + glycine + ATP = glycyl-tRNA(Gly) + AMP + diphosphate. The sequence is that of Glycine--tRNA ligase beta subunit from Persephonella marina (strain DSM 14350 / EX-H1).